Consider the following 576-residue polypeptide: Glucoamylase ARB_02327-1 (576 aa).

An N-terminal signal peptide occupies residues 1–20 (MGLASTVSLALLGLCSLARA). Trp-141 contacts substrate. Asn-168 and Asn-192 each carry an N-linked (GlcNAc...) asparagine glycan. Asp-197 acts as the Proton acceptor in catalysis. Glu-200 serves as the catalytic Proton donor. 2 cysteine pairs are disulfide-bonded: Cys-243–Cys-470 and Cys-285–Cys-293. A CBM20 domain is found at 477–576 (GSGGDTVAVT…GSFTQNDTWR (100 aa)). The tract at residues 552 to 576 (TWESDPNRSITTSASGSFTQNDTWR) is disordered. N-linked (GlcNAc...) asparagine glycosylation is found at Asn-558 and Asn-572.

It belongs to the glycosyl hydrolase 15 family.

It localises to the secreted. It carries out the reaction Hydrolysis of terminal (1-&gt;4)-linked alpha-D-glucose residues successively from non-reducing ends of the chains with release of beta-D-glucose.. The polypeptide is Glucoamylase ARB_02327-1 (Schizophyllum commune (strain H4-8 / FGSC 9210) (Split gill fungus)).